The primary structure comprises 522 residues: N-acetylgalactosamine-6-sulfatase (522 aa).

An N-terminal signal peptide occupies residues 1–25 (MAAVAAATRWHLLLVLSAAGLGVTG). A catalytic domain region spans residues 27-379 (PQPPNILLLL…PAMLQGRLTE (353 aa)). 3 residues coordinate Ca(2+): aspartate 38, aspartate 39, and cysteine 78. The Nucleophile role is filled by cysteine 78. Cysteine 78 bears the 3-oxoalanine (Cys) mark. The active site involves histidine 141. N-linked (GlcNAc...) asparagine glycosylation occurs at asparagine 203. Aspartate 288 and asparagine 289 together coordinate Ca(2+). Cysteine 308 and cysteine 419 are disulfide-bonded. Asparagine 423 carries N-linked (GlcNAc...) asparagine glycosylation. 2 disulfides stabilise this stretch: cysteine 489/cysteine 518 and cysteine 501/cysteine 507.

This sequence belongs to the sulfatase family. Homodimer. Ca(2+) serves as cofactor. Post-translationally, the conversion to 3-oxoalanine (also known as C-formylglycine, FGly), of a serine or cysteine residue in prokaryotes and of a cysteine residue in eukaryotes, is critical for catalytic activity.

The protein localises to the lysosome. It catalyses the reaction Hydrolysis of the 6-sulfate groups of the N-acetyl-D-galactosamine 6-sulfate units of chondroitin sulfate and of the D-galactose 6-sulfate units of keratan sulfate.. In Sus scrofa (Pig), this protein is N-acetylgalactosamine-6-sulfatase (GALNS).